A 93-amino-acid chain; its full sequence is Phosphoribosyl-ATP pyrophosphatase (93 aa).

Belongs to the PRA-PH family.

The protein localises to the cytoplasm. It catalyses the reaction 1-(5-phospho-beta-D-ribosyl)-ATP + H2O = 1-(5-phospho-beta-D-ribosyl)-5'-AMP + diphosphate + H(+). It participates in amino-acid biosynthesis; L-histidine biosynthesis; L-histidine from 5-phospho-alpha-D-ribose 1-diphosphate: step 2/9. The sequence is that of Phosphoribosyl-ATP pyrophosphatase from Mycobacterium avium (strain 104).